Consider the following 236-residue polypeptide: Small ribosomal subunit protein uS2c (236 aa).

It belongs to the universal ribosomal protein uS2 family.

Its subcellular location is the plastid. The protein resides in the chloroplast. This is Small ribosomal subunit protein uS2c (rps2) from Citrus sinensis (Sweet orange).